The following is a 278-amino-acid chain: Phosphatidylglycerol--prolipoprotein diacylglyceryl transferase (278 aa).

3 helical membrane-spanning segments follow: residues 21-41 (WYGI…QASV), 54-74 (IIFW…VIFQ), and 88-108 (IWQG…TGII). Arginine 136 lines the a 1,2-diacyl-sn-glycero-3-phospho-(1'-sn-glycerol) pocket. 3 helical membrane passes run 176–196 (QPTF…LILL), 202–222 (IGDT…FVEG), and 234–254 (IRIA…IMIV).

The protein belongs to the Lgt family.

It is found in the cell membrane. It catalyses the reaction L-cysteinyl-[prolipoprotein] + a 1,2-diacyl-sn-glycero-3-phospho-(1'-sn-glycerol) = an S-1,2-diacyl-sn-glyceryl-L-cysteinyl-[prolipoprotein] + sn-glycerol 1-phosphate + H(+). Its pathway is protein modification; lipoprotein biosynthesis (diacylglyceryl transfer). Functionally, catalyzes the transfer of the diacylglyceryl group from phosphatidylglycerol to the sulfhydryl group of the N-terminal cysteine of a prolipoprotein, the first step in the formation of mature lipoproteins. This is Phosphatidylglycerol--prolipoprotein diacylglyceryl transferase from Staphylococcus saprophyticus subsp. saprophyticus (strain ATCC 15305 / DSM 20229 / NCIMB 8711 / NCTC 7292 / S-41).